The chain runs to 249 residues: 2,3-bisphosphoglycerate-dependent phosphoglycerate mutase (249 aa).

Residues 9 to 16 (RHGQSQWN), 22 to 23 (TG), Arg61, 88 to 91 (ERHY), Lys99, 115 to 116 (RR), and 184 to 185 (GN) each bind substrate. His10 acts as the Tele-phosphohistidine intermediate in catalysis. The active-site Proton donor/acceptor is the Glu88.

It belongs to the phosphoglycerate mutase family. BPG-dependent PGAM subfamily. Homodimer.

It carries out the reaction (2R)-2-phosphoglycerate = (2R)-3-phosphoglycerate. It functions in the pathway carbohydrate degradation; glycolysis; pyruvate from D-glyceraldehyde 3-phosphate: step 3/5. Functionally, catalyzes the interconversion of 2-phosphoglycerate and 3-phosphoglycerate. This is 2,3-bisphosphoglycerate-dependent phosphoglycerate mutase from Xylella fastidiosa (strain M23).